The sequence spans 297 residues: 4-hydroxy-tetrahydrodipicolinate synthase (297 aa).

Threonine 47 serves as a coordination point for pyruvate. Tyrosine 135 (proton donor/acceptor) is an active-site residue. Lysine 163 functions as the Schiff-base intermediate with substrate in the catalytic mechanism. Isoleucine 205 contributes to the pyruvate binding site.

It belongs to the DapA family. Homotetramer; dimer of dimers.

It is found in the cytoplasm. The enzyme catalyses L-aspartate 4-semialdehyde + pyruvate = (2S,4S)-4-hydroxy-2,3,4,5-tetrahydrodipicolinate + H2O + H(+). The protein operates within amino-acid biosynthesis; L-lysine biosynthesis via DAP pathway; (S)-tetrahydrodipicolinate from L-aspartate: step 3/4. Functionally, catalyzes the condensation of (S)-aspartate-beta-semialdehyde [(S)-ASA] and pyruvate to 4-hydroxy-tetrahydrodipicolinate (HTPA). This is 4-hydroxy-tetrahydrodipicolinate synthase from Dehalococcoides mccartyi (strain ATCC BAA-2100 / JCM 16839 / KCTC 5957 / BAV1).